The following is a 383-amino-acid chain: Succinyl-diaminopimelate desuccinylase (383 aa).

A Zn(2+)-binding site is contributed by His72. Asp74 is a catalytic residue. Asp105 contacts Zn(2+). Glu139 acts as the Proton acceptor in catalysis. Positions 140, 168, and 356 each coordinate Zn(2+).

It belongs to the peptidase M20A family. DapE subfamily. In terms of assembly, homodimer. The cofactor is Zn(2+). Co(2+) is required as a cofactor.

It carries out the reaction N-succinyl-(2S,6S)-2,6-diaminopimelate + H2O = (2S,6S)-2,6-diaminopimelate + succinate. The protein operates within amino-acid biosynthesis; L-lysine biosynthesis via DAP pathway; LL-2,6-diaminopimelate from (S)-tetrahydrodipicolinate (succinylase route): step 3/3. Its function is as follows. Catalyzes the hydrolysis of N-succinyl-L,L-diaminopimelic acid (SDAP), forming succinate and LL-2,6-diaminopimelate (DAP), an intermediate involved in the bacterial biosynthesis of lysine and meso-diaminopimelic acid, an essential component of bacterial cell walls. In Beijerinckia indica subsp. indica (strain ATCC 9039 / DSM 1715 / NCIMB 8712), this protein is Succinyl-diaminopimelate desuccinylase.